A 345-amino-acid chain; its full sequence is Protein D345L (345 aa).

This sequence belongs to the asfivirus D345L family. Interacts with IKKA/CHUK and IKBKB.

It localises to the host cytoplasm. Plays a role in the negative regulation of host NF-kappa-B signaling pathway. Mechanistically, recruits IKKA/CHUK and IKBKB to suppress their kinase activity towards NFKBIA. In African swine fever virus (isolate Tick/South Africa/Pretoriuskop Pr4/1996) (ASFV), this protein is Protein D345L.